A 73-amino-acid chain; its full sequence is U-scoloptoxin(15)-Sa1a (73 aa).

An N-terminal signal peptide occupies residues 1-20 (MKFHIIFCLLAALMMTSAFA).

It belongs to the scoloptoxin-15 family. Contains 2 disulfide bonds. Expressed by the venom gland.

The protein resides in the secreted. The chain is U-scoloptoxin(15)-Sa1a from Scolopendra alternans (Florida Keys giant centipede).